Consider the following 815-residue polypeptide: Tubulin polyglutamylase TTLL13 (815 aa).

Residues 85 to 430 (RRSLAINLTN…RGCDKRKVME (346 aa)) enclose the TTL domain. Residues Lys-202, 208-209 (QG), 230-233 (QQYI), and 243-245 (KFD) each bind ATP. Position 208 (Gln-208) interacts with a protein. Arg-269 contacts L-glutamate. Position 291–292 (291–292 (TN)) interacts with ATP. L-glutamate is bound by residues Tyr-293 and Lys-311. Mg(2+) contacts are provided by Asp-376, Glu-389, and Asn-391. Residues 401–482 (CLDQEVKDAL…LGKYRRIYPG (82 aa)) are c-MTBD region. An L-glutamate-binding site is contributed by Lys-407. Residues 504–528 (ASKAREECARQQLEEIRLKQEQQET) adopt a coiled-coil conformation. The segment at 520 to 556 (RLKQEQQETSGTKRQKARDQNQGESAGEKSRPRAGLQ) is disordered. Basic and acidic residues predominate over residues 536 to 550 (ARDQNQGESAGEKSR).

It belongs to the tubulin--tyrosine ligase family. It depends on Mg(2+) as a cofactor.

It carries out the reaction (L-glutamyl)(n)-gamma-L-glutamyl-L-glutamyl-[protein] + L-glutamate + ATP = (L-glutamyl)(n+1)-gamma-L-glutamyl-L-glutamyl-[protein] + ADP + phosphate + H(+). Its function is as follows. Polyglutamylase which modifies tubulin, generating polyglutamate side chains of variable lengths on the gamma-carboxyl group of specific glutamate residues within the C-terminal tail of tubulin. Mediates ATP-dependent polyglutamate side-chain elongation of the polyglutamylation reaction but not the initiation step. Preferentially modifies the alpha-tubulin tail over a beta-tail. The chain is Tubulin polyglutamylase TTLL13 from Homo sapiens (Human).